A 156-amino-acid polypeptide reads, in one-letter code: Ribosomal RNA large subunit methyltransferase H (156 aa).

Residues leucine 73, glycine 104, and 123-128 (LSPLTL) contribute to the S-adenosyl-L-methionine site.

It belongs to the RNA methyltransferase RlmH family. Homodimer.

Its subcellular location is the cytoplasm. It carries out the reaction pseudouridine(1915) in 23S rRNA + S-adenosyl-L-methionine = N(3)-methylpseudouridine(1915) in 23S rRNA + S-adenosyl-L-homocysteine + H(+). In terms of biological role, specifically methylates the pseudouridine at position 1915 (m3Psi1915) in 23S rRNA. This is Ribosomal RNA large subunit methyltransferase H from Yersinia pseudotuberculosis serotype O:1b (strain IP 31758).